Here is a 150-residue protein sequence, read N- to C-terminus: Transcriptional repressor NrdR (150 aa).

The segment at 3-34 is a zinc-finger region; that stretch reads CPFCNFEESKVVDSRATDDNTTIRRRRECLNC. The ATP-cone domain occupies 49–139; sequence VLVVKKDLTR…VYRQFKDINT (91 aa).

The protein belongs to the NrdR family. It depends on Zn(2+) as a cofactor.

Negatively regulates transcription of bacterial ribonucleotide reductase nrd genes and operons by binding to NrdR-boxes. The sequence is that of Transcriptional repressor NrdR from Clostridium botulinum (strain Alaska E43 / Type E3).